Consider the following 377-residue polypeptide: NIF3-like protein 1 (377 aa).

The residue at position 109 (lysine 109) is an N6-acetyllysine. A mediates interaction with COPS2 region spans residues 244 to 377; the sequence is LLLHTGMGRL…ETDRDPLQVV (134 aa). Position 255 is a phosphothreonine (threonine 255). Serine 259 carries the phosphoserine modification.

Belongs to the GTP cyclohydrolase I type 2/NIF3 family. In terms of assembly, homodimer. Interacts with COPS2. Interacts with THOC7.

It is found in the cytoplasm. Its subcellular location is the nucleus. May function as a transcriptional corepressor through its interaction with COPS2, negatively regulating the expression of genes involved in neuronal differentiation. This chain is NIF3-like protein 1, found in Homo sapiens (Human).